The sequence spans 329 residues: MSPPAATFDIPVANTGNGLSLKKDLAVKPAASGVAKSLAEIEHNWEKFTFAPIRESQVSRAMTRRYFNDLDTYAESDVVIIGAGSCGLSAAYTLASKRPDLKIAMVEAGVAPGGGAWLGGQLFSAMVMRKPAELFLNEIGVPYEDEGDFVVVKHAALFTSTLMSKVLNFPNVKLFNATAVEDLITRPAPTSNDPNAVRIAGVVTNWTLVSMHHDDQSCMDPNTINAPLIISTTGHDGPFGAFSVKRLVSMQQLPQLGGMRGLDMRTAEDAIVKRTREVVPGLIVGGMELSEVDGANRMGPTFGAMVLSGVKAAEEAIGVWDERKAQNDE.

Substrate-binding positions include cysteine 86, 107–108, glycine 115, and valine 180; that span reads EA. A 2,3-didehydroalanine (Cys) modification is found at cysteine 218. Residues aspartate 220, histidine 235, methionine 287, and 297-299 contribute to the substrate site; that span reads RMG.

This sequence belongs to the THI4 family. As to quaternary structure, homooctamer. The cofactor is Fe cation. Post-translationally, during the catalytic reaction, a sulfide is transferred from Cys-218 to a reaction intermediate, generating a dehydroalanine residue.

The protein localises to the cytoplasm. The protein resides in the nucleus. The enzyme catalyses [ADP-thiazole synthase]-L-cysteine + glycine + NAD(+) = [ADP-thiazole synthase]-dehydroalanine + ADP-5-ethyl-4-methylthiazole-2-carboxylate + nicotinamide + 3 H2O + 2 H(+). Its function is as follows. Involved in biosynthesis of the thiamine precursor thiazole. Catalyzes the conversion of NAD and glycine to adenosine diphosphate 5-(2-hydroxyethyl)-4-methylthiazole-2-carboxylic acid (ADT), an adenylated thiazole intermediate. The reaction includes an iron-dependent sulfide transfer from a conserved cysteine residue of the protein to a thiazole intermediate. The enzyme can only undergo a single turnover, which suggests it is a suicide enzyme. May have additional roles in adaptation to various stress conditions and in DNA damage tolerance. In Phaeosphaeria nodorum (strain SN15 / ATCC MYA-4574 / FGSC 10173) (Glume blotch fungus), this protein is Thiamine thiazole synthase.